The following is a 332-amino-acid chain: GTP 3',8-cyclase (332 aa).

One can recognise a Radical SAM core domain in the interval 9 to 220 (GYNRRVDYLR…TQVRERIAER (212 aa)). Arginine 18 is a GTP binding site. 2 residues coordinate [4Fe-4S] cluster: cysteine 25 and cysteine 29. Tyrosine 31 is a binding site for S-adenosyl-L-methionine. A [4Fe-4S] cluster-binding site is contributed by cysteine 32. Residue arginine 67 coordinates GTP. An S-adenosyl-L-methionine-binding site is contributed by glycine 71. Threonine 98 is a binding site for GTP. Position 122 (serine 122) interacts with S-adenosyl-L-methionine. Position 159 (lysine 159) interacts with GTP. Residue methionine 193 participates in S-adenosyl-L-methionine binding. [4Fe-4S] cluster-binding residues include cysteine 258 and cysteine 261. 263–265 (RVR) serves as a coordination point for GTP. A [4Fe-4S] cluster-binding site is contributed by cysteine 275.

This sequence belongs to the radical SAM superfamily. MoaA family. In terms of assembly, monomer and homodimer. [4Fe-4S] cluster serves as cofactor.

It catalyses the reaction GTP + AH2 + S-adenosyl-L-methionine = (8S)-3',8-cyclo-7,8-dihydroguanosine 5'-triphosphate + 5'-deoxyadenosine + L-methionine + A + H(+). It functions in the pathway cofactor biosynthesis; molybdopterin biosynthesis. Its function is as follows. Catalyzes the cyclization of GTP to (8S)-3',8-cyclo-7,8-dihydroguanosine 5'-triphosphate. The sequence is that of GTP 3',8-cyclase from Pseudomonas fluorescens (strain Pf0-1).